The chain runs to 95 residues: Transcription and mRNA export factor ENY2-2 (95 aa).

The protein belongs to the ENY2 family. In terms of assembly, component of the nuclear pore complex (NPC)-associated TREX-2 complex (transcription and export complex 2). Component of the SAGA transcription coactivator-HAT complex. Within the SAGA complex, participates in a subcomplex of SAGA called the DUB module (deubiquitination module).

The protein resides in the nucleus. It is found in the nucleoplasm. Functionally, involved in mRNA export coupled transcription activation by association with both the TREX-2 and the SAGA complexes. The transcription regulatory histone acetylation (HAT) complex SAGA is a multiprotein complex that activates transcription by remodeling chromatin and mediating histone acetylation and deubiquitination. Within the SAGA complex, participates in a subcomplex that specifically deubiquitinates histones. The SAGA complex is recruited to specific gene promoters by activators, where it is required for transcription. The TREX-2 complex functions in docking export-competent ribonucleoprotein particles (mRNPs) to the nuclear entrance of the nuclear pore complex (nuclear basket). TREX-2 participates in mRNA export and accurate chromatin positioning in the nucleus by tethering genes to the nuclear periphery. The polypeptide is Transcription and mRNA export factor ENY2-2 (eny2-2) (Salmo salar (Atlantic salmon)).